The sequence spans 568 residues: ATP-dependent RNA helicase MRH4, mitochondrial (568 aa).

A mitochondrion-targeting transit peptide spans 1 to 50 (MVSILAIRTFNPLGHFVSTQCVRAYAINSVRAGSKSSSVRAGSKNDTTRA). The segment covering 36-49 (SSSVRAGSKNDTTR) has biased composition (polar residues). The interval 36–64 (SSSVRAGSKNDTTRASSKKNKAGKSKLQL) is disordered. A Q motif motif is present at residues 143 to 150 (EIHPSPIQ). The 189-residue stretch at 160–348 (NLMEPKLQVH…TKMFPNAIPL (189 aa)) folds into the Helicase ATP-binding domain. An ATP-binding site is contributed by 173–180 (AETGSGKT). Residues 296 to 299 (DEAD) carry the DEAD box motif. The Helicase C-terminal domain occupies 379 to 568 (ALAQTLYAIA…TILKKNKALT (190 aa)).

Belongs to the DEAD box helicase family. MRH4 subfamily.

The protein resides in the mitochondrion. It carries out the reaction ATP + H2O = ADP + phosphate + H(+). Its function is as follows. ATP-binding RNA helicase involved in mitochondrial RNA metabolism. Required for maintenance of mitochondrial DNA. The sequence is that of ATP-dependent RNA helicase MRH4, mitochondrial (MRH4) from Candida glabrata (strain ATCC 2001 / BCRC 20586 / JCM 3761 / NBRC 0622 / NRRL Y-65 / CBS 138) (Yeast).